A 260-amino-acid chain; its full sequence is Cystine transporter (260 aa).

Positions 1-67 (MVSLDDILGI…QLYCWKMTGD (67 aa)) constitute a PQ-loop 1 domain. The next 5 membrane-spanning stretches (helical) occupy residues 7–28 (ILGIVYVTSWSISMYPPIITNW), 40–62 (FVMLNTAGYSYLVISIFLQLYCW), 81–102 (FWYCLHGCLMNVVLLTQVVAGA), 118–138 (WYLRILLASLAIFSLLTVQFM), and 151–175 (TLAYCNNLFLLKISMSLIKYIPQVT). Residues 162–212 (KISMSLIKYIPQVTHNSTRKSMDCFPIQGVFLDVTGGIASLLQLIWQLSND) form the PQ-loop 2 domain. The N-linked (GlcNAc...) asparagine glycan is linked to asparagine 177. Helical transmembrane passes span 185 to 205 (CFPIQGVFLDVTGGIASLLQL) and 227 to 247 (VGLSMVTLIFNFIFIMQWFVY).

It belongs to the cystinosin family.

The protein localises to the endosome membrane. Its subcellular location is the vacuole membrane. It catalyses the reaction L-cystine(out) + H(+)(out) = L-cystine(in) + H(+)(in). Its function is as follows. Cystine/H(+) symporter that mediates export of cystine, the oxidized dimer of cysteine, from vacuoles/endodomes. This chain is Cystine transporter (ERS1), found in Saccharomyces cerevisiae (strain ATCC 204508 / S288c) (Baker's yeast).